Consider the following 507-residue polypeptide: Fumarate hydratase, mitochondrial (507 aa).

The N-terminal 41 residues, 1 to 41 (MYRALRLLARSRRLLRVPSAGAAVSGEATTLPRCAPNVARM), are a transit peptide targeting the mitochondrion. An N6-acetyllysine; alternate mark is found at lysine 58, lysine 63, and lysine 77. 3 positions are modified to N6-succinyllysine; alternate: lysine 58, lysine 63, and lysine 77. Phosphothreonine is present on threonine 82. An N6-acetyllysine; alternate mark is found at lysine 112 and lysine 119. Residues lysine 112 and lysine 119 each carry the N6-succinyllysine; alternate modification. Substrate is bound by residues 142–144 (SGT), 173–176 (HPND), and 183–185 (SSN). Lysine 210 is subject to N6-acetyllysine. Lysine 220 carries the post-translational modification N6-acetyllysine; alternate. Lysine 220 carries the N6-succinyllysine; alternate modification. Threonine 231 is a binding site for substrate. The active-site Proton donor/acceptor is the histidine 232. Phosphothreonine is present on threonine 233. Lysine 289 is subject to N6-acetyllysine; alternate. Residue lysine 289 is modified to N6-succinyllysine; alternate. Residue serine 362 is part of the active site. Residues serine 363 and 368 to 370 (KVN) each bind substrate. Phosphoserine is present on serine 363. N6-succinyllysine occurs at positions 464 and 470. An N6-acetyllysine modification is found at lysine 499.

It belongs to the class-II fumarase/aspartase family. Fumarase subfamily. In terms of assembly, homotetramer. Interacts with H2AZ1. In terms of processing, phosphorylation at Thr-233 by PRKDC in response to DNA damage promotes translocation to the nucleus and recruitment to DNA double-strand breaks (DSBs).

Its subcellular location is the mitochondrion. The protein resides in the cytoplasm. The protein localises to the cytosol. It is found in the nucleus. It localises to the chromosome. The catalysed reaction is (S)-malate = fumarate + H2O. It participates in carbohydrate metabolism; tricarboxylic acid cycle; (S)-malate from fumarate: step 1/1. Catalyzes the reversible stereospecific interconversion of fumarate to L-malate. Experiments in different species have demonstrated that specific isoforms of this protein act in defined pathways and favor one direction over the other. Its function is as follows. Catalyzes the hydration of fumarate to L-malate in the tricarboxylic acid (TCA) cycle to facilitate a transition step in the production of energy in the form of NADH. Functionally, catalyzes the dehydration of L-malate to fumarate. Fumarate metabolism in the cytosol plays a role during urea cycle and arginine metabolism; fumarate being a by-product of the urea cycle and amino-acid catabolism. Also plays a role in DNA repair by promoting non-homologous end-joining (NHEJ). In response to DNA damage and phosphorylation by PRKDC, translocates to the nucleus and accumulates at DNA double-strand breaks (DSBs): acts by catalyzing formation of fumarate, an inhibitor of KDM2B histone demethylase activity, resulting in enhanced dimethylation of histone H3 'Lys-36' (H3K36me2). This is Fumarate hydratase, mitochondrial from Mus musculus (Mouse).